The primary structure comprises 377 residues: Citrate synthase (377 aa).

Catalysis depends on residues His-258 and Asp-313.

It belongs to the citrate synthase family. As to quaternary structure, homodimer. In terms of processing, the N-terminus is blocked by acetylation.

The enzyme catalyses oxaloacetate + acetyl-CoA + H2O = citrate + CoA + H(+). It functions in the pathway carbohydrate metabolism; tricarboxylic acid cycle; isocitrate from oxaloacetate: step 1/2. Its activity is regulated as follows. Allosterically inhibited by NADH. In Saccharolobus solfataricus (strain ATCC 35092 / DSM 1617 / JCM 11322 / P2) (Sulfolobus solfataricus), this protein is Citrate synthase (gltA).